A 275-amino-acid chain; its full sequence is Putative phosphoenolpyruvate synthase regulatory protein (275 aa).

Residue 153-160 (GVSRSGKT) participates in ADP binding.

This sequence belongs to the pyruvate, phosphate/water dikinase regulatory protein family. PSRP subfamily.

The catalysed reaction is [pyruvate, water dikinase] + ADP = [pyruvate, water dikinase]-phosphate + AMP + H(+). It catalyses the reaction [pyruvate, water dikinase]-phosphate + phosphate + H(+) = [pyruvate, water dikinase] + diphosphate. Its function is as follows. Bifunctional serine/threonine kinase and phosphorylase involved in the regulation of the phosphoenolpyruvate synthase (PEPS) by catalyzing its phosphorylation/dephosphorylation. The sequence is that of Putative phosphoenolpyruvate synthase regulatory protein from Nitrosomonas eutropha (strain DSM 101675 / C91 / Nm57).